The primary structure comprises 914 residues: Protein GAMETE EXPRESSED 2 (914 aa).

Filamin repeat units follow at residues Ile249–Val382 and Ala391–Val485. A helical transmembrane segment spans residues Leu893–Ile913.

As to expression, in tricellular pollen, expressed in mature sperm cells but not in the vegetative cell. In bicellular pollen, detected in the progenitor generative cell. Detected in the egg cell within the female gametophyte.

It localises to the cell membrane. This chain is Protein GAMETE EXPRESSED 2 (GEX2), found in Arabidopsis thaliana (Mouse-ear cress).